Here is a 320-residue protein sequence, read N- to C-terminus: Cytosolic Fe-S cluster assembly factor NUBP1 (320 aa).

Methionine 1 is subject to N-acetylmethionine. Positions 8, 22, 25, and 31 each coordinate [4Fe-4S] cluster. An ATP-binding site is contributed by glycine 62–serine 69. [4Fe-4S] cluster contacts are provided by cysteine 235 and cysteine 238. Serine 319 is subject to Phosphoserine.

This sequence belongs to the Mrp/NBP35 ATP-binding proteins family. NUBP1/NBP35 subfamily. In terms of assembly, heterotetramer of 2 NUBP1 and 2 NUBP2 chains. Interacts with KIFC1. Interacts with the BBS/CCT complex subunit CCT1. [4Fe-4S] cluster is required as a cofactor.

The protein resides in the cytoplasm. Its subcellular location is the nucleus. It is found in the cell projection. It localises to the cytoskeleton. The protein localises to the cilium axoneme. The protein resides in the cilium basal body. Its subcellular location is the microtubule organizing center. It is found in the centrosome. It localises to the centriole. Its function is as follows. Component of the cytosolic iron-sulfur (Fe/S) protein assembly (CIA) machinery. Required for maturation of extramitochondrial Fe-S proteins. The NUBP1-NUBP2 heterotetramer forms a Fe-S scaffold complex, mediating the de novo assembly of an Fe-S cluster and its transfer to target apoproteins. Implicated in the regulation of centrosome duplication. Negatively regulates cilium formation and structure. In Rattus norvegicus (Rat), this protein is Cytosolic Fe-S cluster assembly factor NUBP1.